The sequence spans 438 residues: EF-hand calcium-binding domain-containing protein 3 (438 aa).

2 consecutive EF-hand domains span residues 47–82 (SQMA…LGMN) and 83–118 (LTKH…KNLF). The Ca(2+) site is built by aspartate 96, aspartate 98, aspartate 100, lysine 102, and aspartate 107. The residue at position 279 (tyrosine 279) is a Phosphotyrosine. Low complexity predominate over residues 405–415 (SSHNSRSSSSS). A disordered region spans residues 405–438 (SSHNSRSSSSSDTSECYTDSGRKRKRKGLKGFQQ). Residues 426–438 (RKRKRKGLKGFQQ) are compositionally biased toward basic residues.

The protein is EF-hand calcium-binding domain-containing protein 3 (EFCAB3) of Homo sapiens (Human).